We begin with the raw amino-acid sequence, 306 residues long: Homoserine kinase (306 aa).

An ATP-binding site is contributed by P95–A105.

Belongs to the GHMP kinase family. Homoserine kinase subfamily.

Its subcellular location is the cytoplasm. The catalysed reaction is L-homoserine + ATP = O-phospho-L-homoserine + ADP + H(+). The protein operates within amino-acid biosynthesis; L-threonine biosynthesis; L-threonine from L-aspartate: step 4/5. Catalyzes the ATP-dependent phosphorylation of L-homoserine to L-homoserine phosphate. In Mycobacteroides abscessus (strain ATCC 19977 / DSM 44196 / CCUG 20993 / CIP 104536 / JCM 13569 / NCTC 13031 / TMC 1543 / L948) (Mycobacterium abscessus), this protein is Homoserine kinase.